The sequence spans 104 residues: Ig lambda-1 chain C region (104 aa).

In terms of domain architecture, Ig-like spans 6–99 (PSVTLFPPSS…EENTVEKSLS (94 aa)). A disulfide bond links C27 and C85.

This chain is Ig lambda-1 chain C region, found in Rattus norvegicus (Rat).